We begin with the raw amino-acid sequence, 117 residues long: Ribonuclease P protein component 4 (117 aa).

Residues Cys-64, Cys-67, Cys-93, and Cys-96 each contribute to the Zn(2+) site.

It belongs to the eukaryotic/archaeal RNase P protein component 4 family. As to quaternary structure, consists of a catalytic RNA component and at least 4-5 protein subunits. Zn(2+) serves as cofactor.

It is found in the cytoplasm. The catalysed reaction is Endonucleolytic cleavage of RNA, removing 5'-extranucleotides from tRNA precursor.. In terms of biological role, part of ribonuclease P, a protein complex that generates mature tRNA molecules by cleaving their 5'-ends. This chain is Ribonuclease P protein component 4, found in Pyrococcus abyssi (strain GE5 / Orsay).